The primary structure comprises 1052 residues: Focal adhesion kinase 1 (1052 aa).

Residues 1-27 are disordered; it reads MAAAYLDPNLNHTPNSSTKTHLGTGME. Residue A2 is modified to N-acetylalanine. Phosphotyrosine is present on Y5. Positions 10–21 are enriched in polar residues; that stretch reads LNHTPNSSTKTH. T13 carries the post-translational modification Phosphothreonine. Residues S29 and S54 each carry the phosphoserine modification. The FERM domain occupies 35 to 355; it reads RVLKVFHYFE…GYCRLVNGTS (321 aa). Residue K152 forms a Glycyl lysine isopeptide (Lys-Gly) (interchain with G-Cter in SUMO) linkage. Phosphotyrosine; by autocatalysis is present on Y397. At Y407 the chain carries Phosphotyrosine. One can recognise a Protein kinase domain in the interval 422 to 680; the sequence is IELGRCIGEG…ELKAQLSTIL (259 aa). ATP-binding positions include 428–434, K454, and 500–502; these read IGEGQFG and ELC. D546 functions as the Proton acceptor in the catalytic mechanism. Y570 carries the post-translational modification Phosphotyrosine. Residues Y576 and Y577 each carry the phosphotyrosine; by RET and SRC modification. At S580 the chain carries Phosphoserine. Positions 684–697 are enriched in basic and acidic residues; sequence KAQQEERMRMESRR. 2 disordered regions span residues 684-734 and 839-922; these read KAQQ…PSPQ and LSRG…RSND. Residues 707 to 1052 form an interaction with TGFB1I1 region; the sequence is GSDEAPPKPS…LKMLGQTRPH (346 aa). S722 carries the phosphoserine modification. The residue at position 732 (S732) is a Phosphoserine; by CDK5. Residues 839–849 show a composition bias toward basic and acidic residues; that stretch reads LSRGSIDREDG. S843 is subject to Phosphoserine. Y861 is modified (phosphotyrosine). A compositionally biased stretch (pro residues) spans 869–880; it reads PAAPPKKPPRPG. 2 positions are modified to phosphoserine: S887 and S910. The interval 912–1052 is interaction with ARHGEF28; sequence PPTANLDRSN…LKMLGQTRPH (141 aa). T914 carries the post-translational modification Phosphothreonine. Y925 is subject to Phosphotyrosine.

It belongs to the protein kinase superfamily. Tyr protein kinase family. FAK subfamily. In terms of assembly, interacts (via first Pro-rich region) with CAS family members (via SH3 domain), including BCAR1, BCAR3, and CASS4. Interacts with NEDD9 (via SH3 domain). Interacts with GIT1. Interacts with SORBS1. Interacts with ARHGEF28. Interacts with SHB. Part of a complex composed of THSD1, PTK2/FAK1, TLN1 and VCL. Interacts with PXN and TLN1. Interacts with STAT1. Interacts with DCC. Interacts with WASL. Interacts with ARHGEF7. Interacts with GRB2 and GRB7. Component of a complex that contains at least FER, CTTN and PTK2/FAK1. Interacts with BMX. Interacts with TGFB1I1. Interacts with STEAP4. Interacts with ZFYVE21. Interacts with ESR1. Interacts with PIK3R1 or PIK3R2. Interacts with SRC, FGR, FLT4 and RET. Interacts with EPHA2 in resting cells; activation of EPHA2 recruits PTPN11, leading to dephosphorylation of PTK2/FAK1 and dissociation of the complex. Interacts with EPHA1 (kinase activity-dependent). Interacts with CD4; this interaction requires the presence of HIV-1 gp120. Interacts with PIAS1. Interacts with ARHGAP26 and SHC1. Interacts with RB1CC1; this inhibits PTK2/FAK1 activity and activation of downstream signaling pathways. Interacts with P53/TP53 and MDM2. Interacts with LPXN (via LD motif 3). Interacts with MISP. Interacts with CIB1 isoform 2. Interacts with CD36. Interacts with EMP2; regulates PTK2 activation and localization. Interacts with DSCAM. Interacts with AMBRA1. Interacts (when tyrosine-phosphorylated) with tensin TNS1; the interaction is increased by phosphorylation of TNS1. Phosphorylated on tyrosine residues upon activation, e.g. upon integrin signaling. Tyr-397 is the major autophosphorylation site, but other kinases can also phosphorylate this residue. Phosphorylation at Tyr-397 promotes interaction with SRC and SRC family members, leading to phosphorylation at Tyr-576, Tyr-577 and at additional tyrosine residues. FGR promotes phosphorylation at Tyr-397 and Tyr-576. FER promotes phosphorylation at Tyr-577, Tyr-861 and Tyr-925, even when cells are not adherent. Tyr-397, Tyr-576 and Ser-722 are phosphorylated only when cells are adherent. Phosphorylation at Tyr-397 is important for interaction with BMX, PIK3R1 and SHC1. Phosphorylation at Tyr-925 is important for interaction with GRB2. Dephosphorylated by PTPN11; PTPN11 is recruited to PTK2 via EPHA2 (tyrosine phosphorylated). Microtubule-induced dephosphorylation at Tyr-397 is crucial for the induction of focal adhesion disassembly; this dephosphorylation could be catalyzed by PTPN11 and regulated by ZFYVE21. Phosphorylation on tyrosine residues is enhanced by NTN1. Post-translationally, sumoylated; this enhances autophosphorylation. Detected in B and T-lymphocytes. Isoform 1 and isoform 6 are detected in lung fibroblasts (at protein level). Ubiquitous. Expressed in epithelial cells (at protein level).

It is found in the cell junction. It localises to the focal adhesion. The protein resides in the cell membrane. Its subcellular location is the cytoplasm. The protein localises to the perinuclear region. It is found in the cell cortex. It localises to the cytoskeleton. The protein resides in the microtubule organizing center. Its subcellular location is the centrosome. The protein localises to the nucleus. It is found in the cilium basal body. The catalysed reaction is L-tyrosyl-[protein] + ATP = O-phospho-L-tyrosyl-[protein] + ADP + H(+). Its activity is regulated as follows. Subject to autoinhibition, mediated by interactions between the FERM domain and the kinase domain. Activated by autophosphorylation at Tyr-397. This promotes interaction with SRC and phosphorylation at Tyr-576 and Tyr-577 in the kinase activation loop. Phosphorylation at Tyr-576 and Tyr-577 is required for maximal kinase activity. Inhibited by TAC544, TAE226, PF-573,228 and PF-562,271. In terms of biological role, non-receptor protein-tyrosine kinase that plays an essential role in regulating cell migration, adhesion, spreading, reorganization of the actin cytoskeleton, formation and disassembly of focal adhesions and cell protrusions, cell cycle progression, cell proliferation and apoptosis. Required for early embryonic development and placenta development. Required for embryonic angiogenesis, normal cardiomyocyte migration and proliferation, and normal heart development. Regulates axon growth and neuronal cell migration, axon branching and synapse formation; required for normal development of the nervous system. Plays a role in osteogenesis and differentiation of osteoblasts. Functions in integrin signal transduction, but also in signaling downstream of numerous growth factor receptors, G-protein coupled receptors (GPCR), EPHA2, netrin receptors and LDL receptors. Forms multisubunit signaling complexes with SRC and SRC family members upon activation; this leads to the phosphorylation of additional tyrosine residues, creating binding sites for scaffold proteins, effectors and substrates. Regulates numerous signaling pathways. Promotes activation of phosphatidylinositol 3-kinase and the AKT1 signaling cascade. Promotes activation of MAPK1/ERK2, MAPK3/ERK1 and the MAP kinase signaling cascade. Promotes localized and transient activation of guanine nucleotide exchange factors (GEFs) and GTPase-activating proteins (GAPs), and thereby modulates the activity of Rho family GTPases. Signaling via CAS family members mediates activation of RAC1. Phosphorylates NEDD9 following integrin stimulation. Recruits the ubiquitin ligase MDM2 to P53/TP53 in the nucleus, and thereby regulates P53/TP53 activity, P53/TP53 ubiquitination and proteasomal degradation. Phosphorylates SRC; this increases SRC kinase activity. Phosphorylates ACTN1, ARHGEF7, GRB7, RET and WASL. Promotes phosphorylation of PXN and STAT1; most likely PXN and STAT1 are phosphorylated by a SRC family kinase that is recruited to autophosphorylated PTK2/FAK1, rather than by PTK2/FAK1 itself. Promotes phosphorylation of BCAR1; GIT2 and SHC1; this requires both SRC and PTK2/FAK1. Promotes phosphorylation of BMX and PIK3R1. Isoform 6 (FRNK) does not contain a kinase domain and inhibits PTK2/FAK1 phosphorylation and signaling. Its enhanced expression can attenuate the nuclear accumulation of LPXN and limit its ability to enhance serum response factor (SRF)-dependent gene transcription. Functionally, isoform 6 (FRNK) does not contain a kinase domain and inhibits PTK2/FAK1 phosphorylation and signaling. Its enhanced expression can attenuate the nuclear accumulation of LPXN and limit its ability to enhance serum response factor (SRF)-dependent gene transcription. The polypeptide is Focal adhesion kinase 1 (Homo sapiens (Human)).